Here is a 502-residue protein sequence, read N- to C-terminus: ATP synthase subunit beta (502 aa).

156–163 contributes to the ATP binding site; it reads GGAGVGKT.

The protein belongs to the ATPase alpha/beta chains family. As to quaternary structure, F-type ATPases have 2 components, CF(1) - the catalytic core - and CF(0) - the membrane proton channel. CF(1) has five subunits: alpha(3), beta(3), gamma(1), delta(1), epsilon(1). CF(0) has three main subunits: a(1), b(2) and c(9-12). The alpha and beta chains form an alternating ring which encloses part of the gamma chain. CF(1) is attached to CF(0) by a central stalk formed by the gamma and epsilon chains, while a peripheral stalk is formed by the delta and b chains.

The protein resides in the cell membrane. It catalyses the reaction ATP + H2O + 4 H(+)(in) = ADP + phosphate + 5 H(+)(out). In terms of biological role, produces ATP from ADP in the presence of a proton gradient across the membrane. The catalytic sites are hosted primarily by the beta subunits. This chain is ATP synthase subunit beta, found in Cellulophaga lytica (Cytophaga lytica).